We begin with the raw amino-acid sequence, 384 residues long: GDP-mannose transporter (384 aa).

The Cytoplasmic portion of the chain corresponds to 1 to 40; sequence MVEDKKTDDYTIEMDKMDQGSKNFEAAAPPPQPRTPPAGS. The helical transmembrane segment at 41 to 61 threads the bilayer; that stretch reads ISNNPILPVLAYCGSSILMTV. Over 62–69 the chain is Lumenal; that stretch reads MNKYVLSG. Residues 70 to 90 traverse the membrane as a helical segment; sequence LDFNLNFFLLCVQSIVCIVAI. Topologically, residues 91 to 110 are cytoplasmic; that stretch reads QTCKSCGLITYRDFSADEAR. A helical membrane pass occupies residues 111–127; that stretch reads KWFPITLLLIGMIYTGS. Residues 128–134 lie on the Lumenal side of the membrane; that stretch reads KALQFLS. A helical transmembrane segment spans residues 135-151; that stretch reads IPVYTIFKNLTIILIAY. The Cytoplasmic portion of the chain corresponds to 152–160; the sequence is GEVLWFGGS. Residues 161 to 182 form a helical membrane-spanning segment; it reads VTGLTLFSFGLMVLSSIIAAWA. Over 183–200 the chain is Lumenal; it reads DIKHAVESTGDATAKVST. Residues 201–221 traverse the membrane as a helical segment; that stretch reads LNAGYIWMLVNCLCTSSYVLG. Residues 222 to 236 lie on the Cytoplasmic side of the membrane; that stretch reads MRKRIKLTNFKDFDT. Residues 237–257 form a helical membrane-spanning segment; it reads LAMFYNNLLSIPVLIVLTGLM. Topologically, residues 258 to 276 are lumenal; the sequence is EDWSSANITRNFPPADRNN. Asn264 is a glycosylation site (N-linked (GlcNAc...) asparagine). The helical transmembrane segment at 277-297 threads the bilayer; the sequence is IIFAMILSGLSSVFISYTSAW. The Cytoplasmic segment spans residues 298–305; sequence CVRVTSST. Residues 306-326 traverse the membrane as a helical segment; sequence TYSMVGALNKLPIALSGLIFF. Over 327 to 329 the chain is Lumenal; it reads DAP. A helical membrane pass occupies residues 330-350; that stretch reads VTFPSVSAIVVGFVSGIVYAV. At 351-384 the chain is on the cytoplasmic side; it reads AKIKQNAKPKTGVLPMSNPPVSASSQSMRDSLRS. Residues 364 to 384 form a disordered region; it reads LPMSNPPVSASSQSMRDSLRS. Polar residues predominate over residues 369–384; sequence PPVSASSQSMRDSLRS.

This sequence belongs to the TPT transporter family. SLC35D subfamily. Homooligomer.

It is found in the golgi apparatus membrane. It localises to the cytoplasmic vesicle membrane. The protein resides in the endoplasmic reticulum membrane. In terms of biological role, involved in the import of GDP-mannose from the cytoplasm into the Golgi lumen. This Aspergillus terreus (strain NIH 2624 / FGSC A1156) protein is GDP-mannose transporter (gmt1).